The primary structure comprises 3066 residues: MSLALNDLLICCRQLEHDRATERRKEVDKFKRLIQDPETVQHLDRHSDSKQGKYLNWDAVFRFLQKYIQKEMESLRTAKSNVSATTQSSRQKKMQEISSLVRYFIKCANKRAPRLKCQDLLNYVMDTVKDSSNGLTYGADCSNILLKDILSVRKYWCEVSQQQWLELFSLYFRLYLKPSQDINRVLVARIIHAVTRGCCSQTDGLPSKFLDLFSKAIQYARQEKSSPGLSHILAALNIFLKSLAVNFRKRVCEAGDEILPTLLYIWTQHRLNDSLKEVIIELIQLQIYIHHPQGARAPEEGAYESMKWKSILYNLYDLLVNEISHIGSRGKYSSGSRNIAVKENLIDLMADICYQLFDADTRSVEISQSYVTQRESTDYSVPCKRRKIDVGWEVIKDYLQKSQSDFDLVPWLQITTRLISKYPSSLPNCELSPLILILYQLLPQQRRGERIPYVLRCLKEVALCQGKKSNLESSQKSDLLKLWIKIWSITFRGISSGQTQTENFGLLEAIIQGSLVELDREFWKLFTGSACKPSSPSVCCLTLALSICVVPDAIKMGTEQSVCEANRSFSVKESIMRWLLFYQLEDDLEDSTELPPILQSNFPHLVVEKILVSLTMKNSKAAMKFFQSVPECEQHCEDKEEPSFSEVEELFLQTTFDKMDFLTTVKEYAVEKFQSSVGFSVQQNLKESLDHYLLGLSEQLLSNYSSEITSSETLVRCSSLLVGVLGCYCYMGIITEDEAHKSELFQKAKSLMQCAGESISLFKNKTNEESRIGSLRNVMHLCTSCLCIHTKHTPNKIASGFFLRLLTSKLMNDIADICKSLASCTKKPLDHGVHPGEDDEDGGGCDSLMEAEGPSSTGLSTAYPASSVSDANDYGENQNAVGAMSPLAADYLSKQDHLLLDMLRFLGRSVTASQSHTVSFRGADIRRKLLLLLDSSILDLMKPLHLHMYLVLLKDLPGNEHSLPMEDVVELLQPLSLVCSLHRRDQDVCKTILSNVLHIVTNLGQGSVDMESTRIAQGHFLTVMGAFWHLTKEKKCVFSVRMALVKCLQTLLEADPYSEWAILNVKGQDFPVNEAFSQFLADDHHQVRMLAAGSVNRLFQDMRQGDFSRSLKALPLKFQQTSFNNAYTTAEAGIRGLLCDSQNPDLLDEIYNRKSVLLMMIAVVLHCSPVCEKQALFALCKSVKENRLEPHLVKKVLEKVSESFGCRSLEDFMISHLDYLVLEWLNLQDTEYSLSSFPFMLLNYTSIEDFYRSCYKILIPHLVIRSHFDEVKSIANQIQKCWKSLLVDCFPKILVHILPYFAYEGTRDSYVSQKRETATKVYDTLKGEDFLGKQIDQVFISNLPEIVVELLMTLHETADSADSDASQSATALCDFSGDLDPAPNPPYFPSHVIQATFAYISNCHKTKFKSILEILSKIPDSYQKILLAICEQAAETNNVFKKHRILKIYHLFVSLLLKDIQSGLGGAWAFVLRDVIYTLIHYINKRSSHFTDVSLRSFSLCCDLLSRVCHTAVTQCKDALESHLHVIVGTLIPLVDYQEVQEQVLDLLKYLVIDNKDNKNLSVTIKLLDPFPDHVIFKDLRLTQQKIKYSGGPFSLLEEINHFLSVSAYNPLPLTRLEGLKDLRRQLEQHKDQMLDLLRASQDNPQDGIVVKLVVSLLQLSKMAVNQTGEREVLEAVGRCLGEIGPLDFSTIAVQHNKDVSYTKAYGLPEDRELQWTLIMLTALNNTLVEDSVKIRSAAATCLKNILATKIGHIFWENYKTSADPMLTYLQPFRTSRKKFLEVPRSVKEDVLEGLDAVNLWVPQSESHDIWIKTLTCAFLDSGGINSEILQLLKPMCEVKTDFCQMLLPYLIHDVLLQDTHESWRTLLSAHVRGFFTSCFKHSSQASRSATPANSDSESENFLRCCLDKKSQRTMLAVVDYLRRQKRPSSGTAFDDAFWLDLNYLEVAKVAQSCSAHFTALLYAEIYSDKKSTDEQEKRSPTFEEGSQGTTISSLSEKSKEETGISLQDLLLEIYRSIGEPDSLYGCGGGKMLQPLTRIRTYEHEATWEKALVTYDLETSISSSTRQSGIIQALQNLGLSHILSVYLKGLDYERREWCAELQELRYQAAWRNMQWGLCASAGQEVEGTSYHESLYNALQCLRNREFSTFYESLRYASLFRVKEVEELSKGSLESVYSLYPTLSRLQAIGELENSGELFSRSVTDRERSEAYWKWQKHSQLLKDSDFSFQEPLMALRTVILETLVQKEMERSQGACSKDILTKHLVEFSVLARTFKNTQLPERAIFKIKQYNSAICGISEWHLEEAQVFWAKKEQSLALSILKQMIKKLDSSFKDKENDAGLKVIYAECLRVCGSWLAETCLENPAVIMQTYLEKAVKVAGSYDGNSRELRNGQMKAFLSLARFSDTQYQRIENYMKSSEFENKQTLLKRAKEEVGLLREHKIQTNRYTVKVQRELELDECALRALREDRKRFLCKAVENYINCLLSGEEHDLWVFRLCSLWLENSGVSEVNGMMKKDGMKISSYKFLPLMYQLAARMGTKMTGGLGFHEVLNNLISRISLDHPHHTLFIILALANANKDEFLSKPETTRRSRITKSTSKENSHLDEDRTEAATRIIHSIRSKRCKMVKDMEALCDAYIILANMDASQWRAQRKGINIPANQPITKLKNLEDVVVPTMEIKVDPTGEYENLVTIKSFKTEFRLAGGLNLPKIIDCVGSDGKERRQLVKGRDDLRQDAVMQQVFQMCNTLLQRNTETRKRKLTICTYKVVPLSQRSGVLEWCTGTVPIGEYLVNSEDGAHRRYRPNDFSANQCQKKMMEVQKKSFEEKYDTFMTICQNFEPVFRYFCMEKFLDPAVWFEKRLAYTRSVATSSIVGYILGLGDRHVQNILINEQSAELVHIDLGVAFEQGKILPTPETVPFRLSRDIVDGMGITGVEGVFRRCCEKTMEVMRSSQETLLTIVEVLLYDPLFDWTMNPLKALYLQQRPEDESDLHSTPNADDQECKQSLSDTDQSFNKVAERVLMRLQEKLKGVEEGTVLSVGGQVNLLIQQAMDPKNLSRLFPGWKAWV.

Ser2 is subject to N-acetylserine. Ser367 carries the post-translational modification Phosphoserine; by autocatalysis. Residues 829–862 (LDHGVHPGEDDEDGGGCDSLMEAEGPSSTGLSTA) form a disordered region. Positions 1380-1389 (DPAPNPPYFP) are interaction with ABL1. Ser1899 carries the post-translational modification Phosphoserine; by autocatalysis. The region spanning 1946-2576 (EVAKVAQSCS…LFIILALANA (631 aa)) is the FAT domain. Positions 1973–1982 (TDEQEKRSPT) are enriched in basic and acidic residues. Disordered stretches follow at residues 1973–2000 (TDEQ…EKSK) and 2585–2607 (PETT…LDED). Polar residues predominate over residues 1985–1996 (EGSQGTTISSLS). Ser1987 is subject to Phosphoserine; by autocatalysis. Over residues 2597-2607 (TSKENSHLDED) the composition is skewed to basic and acidic residues. The PI3K/PI4K catalytic domain occupies 2696–3009 (FKTEFRLAGG…ECKQSLSDTD (314 aa)). Residues 2702-2708 (LAGGLNL) form a G-loop region. The tract at residues 2877–2885 (GLGDRHVQN) is catalytic loop. Residues 2897–2921 (HIDLGVAFEQGKILPTPETVPFRLS) are activation loop. A disordered region spans residues 2986–3007 (DESDLHSTPNADDQECKQSLSD). Residues 2991 to 3007 (HSTPNADDQECKQSLSD) show a composition bias toward polar residues. Ser3006 carries the phosphoserine modification. Lys3026 carries the post-translational modification N6-acetyllysine. The FATC domain occupies 3034 to 3066 (TVLSVGGQVNLLIQQAMDPKNLSRLFPGWKAWV). A Microbody targeting signal; atypical motif is present at residues 3056 to 3058 (SRL).

The protein belongs to the PI3/PI4-kinase family. ATM subfamily. Homodimer. Dimers or tetramers in inactive state. On DNA damage, autophosphorylation dissociates ATM into monomers rendering them catalytically active. Binds p53/TP53, ABL1, BRCA1 and TERF1. Interacts with NBN (via FxF/Y motif). Part of the BRCA1-associated genome surveillance complex (BASC), which contains BRCA1, MSH2, MSH6, MLH1, ATM, BLM, PMS2 and the RAD50-MRE11-NBN protein complex. This association could be a dynamic process changing throughout the cell cycle and within subnuclear domains. Interacts with RAD17; DNA damage promotes the association. Interacts with EEF1E1; the interaction, induced on DNA damage, up-regulates TP53. Interacts with KAT8, NABP2, ATMIN and CEP164. Interacts with AP2B1 and AP3B2; the interaction occurs in cytoplasmic vesicles. Interacts with TELO2 and TTI1. Interacts with DDX1. Interacts with BRAT1. Interacts with CYREN (via XLF motif). Interacts (via microbody targeting signal) with PEX5; promoting translocation to peroxisomes in response to reactive oxygen species (ROS). Phosphorylated by NUAK1/ARK5. Autophosphorylation on Ser-367, Ser-1899, Ser-1987 correlates with DNA damage-mediated activation of the kinase. Post-translationally, phosphorylated by NUAK1/ARK5. Autophosphorylation on Ser-367, Ser-1899, Ser-1987 correlates with DNA damage-mediated activation of the kinase. During the late stages of DNA damage response, dephosphorylated following deacetylation by SIRT7, leading to ATM deactivation. In terms of processing, acetylation, on DNA damage, is required for activation of the kinase activity, dimer-monomer transition, and subsequent autophosphorylation on Ser-1987. Acetylated in vitro by KAT5/TIP60. Deacetylated by SIRT7 during the late stages of DNA damage response, promoting ATM dephosphorylation and subsequent deactivation. As to expression, expressed in brain, skeletal muscle, testis, followed by spleen, lung, kidney, heart, liver and thymus. Ubiquitously expressed in embryonal tissues.

It is found in the nucleus. Its subcellular location is the cytoplasmic vesicle. The protein localises to the cytoplasm. The protein resides in the cytoskeleton. It localises to the microtubule organizing center. It is found in the centrosome. Its subcellular location is the peroxisome matrix. It carries out the reaction L-seryl-[protein] + ATP = O-phospho-L-seryl-[protein] + ADP + H(+). The enzyme catalyses L-threonyl-[protein] + ATP = O-phospho-L-threonyl-[protein] + ADP + H(+). Its activity is regulated as follows. Activated by the MRN (MRE11-RAD50-NBS1) complex in response to DNA double strand breaks (DSBs), which recruits ATM to DSBs and promotes its activation. Inhibited by wortmannin. Its function is as follows. Serine/threonine protein kinase which activates checkpoint signaling upon double strand breaks (DSBs), apoptosis and genotoxic stresses such as ionizing ultraviolet A light (UVA), thereby acting as a DNA damage sensor. Recognizes the substrate consensus sequence [ST]-Q. Phosphorylates 'Ser-139' of histone variant H2AX at double strand breaks (DSBs), thereby regulating DNA damage response mechanism. Also plays a role in pre-B cell allelic exclusion, a process leading to expression of a single immunoglobulin heavy chain allele to enforce clonality and monospecific recognition by the B-cell antigen receptor (BCR) expressed on individual B-lymphocytes. After the introduction of DNA breaks by the RAG complex on one immunoglobulin allele, acts by mediating a repositioning of the second allele to pericentromeric heterochromatin, preventing accessibility to the RAG complex and recombination of the second allele. Also involved in signal transduction and cell cycle control. May function as a tumor suppressor. Necessary for activation of ABL1 and SAPK. Phosphorylates DYRK2, CHEK2, p53/TP53, FBXW7, FANCD2, NFKBIA, BRCA1, CREBBP/CBP, RBBP8/CTIP, FBXO46, MRE11, nibrin (NBN), RAD50, RAD17, PELI1, TERF1, UFL1, RAD9, UBQLN4 and DCLRE1C. May play a role in vesicle and/or protein transport. Could play a role in T-cell development, gonad and neurological function. Binds DNA ends. Plays a role in replication-dependent histone mRNA degradation. Phosphorylation of DYRK2 in nucleus in response to genotoxic stress prevents its MDM2-mediated ubiquitination and subsequent proteasome degradation. Phosphorylates ATF2 which stimulates its function in DNA damage response. Phosphorylates ERCC6 which is essential for its chromatin remodeling activity at DNA double-strand breaks. Phosphorylates TTC5/STRAP at 'Ser-203' in the cytoplasm in response to DNA damage, which promotes TTC5/STRAP nuclear localization. Also involved in pexophagy by mediating phosphorylation of PEX5: translocated to peroxisomes in response to reactive oxygen species (ROS), and catalyzes phosphorylation of PEX5, promoting PEX5 ubiquitination and induction of pexophagy. In Mus musculus (Mouse), this protein is Serine-protein kinase ATM (Atm).